The chain runs to 237 residues: Phosphoribosylaminoimidazole-succinocarboxamide synthase (237 aa).

This sequence belongs to the SAICAR synthetase family.

It carries out the reaction 5-amino-1-(5-phospho-D-ribosyl)imidazole-4-carboxylate + L-aspartate + ATP = (2S)-2-[5-amino-1-(5-phospho-beta-D-ribosyl)imidazole-4-carboxamido]succinate + ADP + phosphate + 2 H(+). Its pathway is purine metabolism; IMP biosynthesis via de novo pathway; 5-amino-1-(5-phospho-D-ribosyl)imidazole-4-carboxamide from 5-amino-1-(5-phospho-D-ribosyl)imidazole-4-carboxylate: step 1/2. In Pseudomonas fluorescens (strain Pf0-1), this protein is Phosphoribosylaminoimidazole-succinocarboxamide synthase.